The following is a 491-amino-acid chain: Glycogen synthase 1 (491 aa).

K15 is an ADP-alpha-D-glucose binding site.

The protein belongs to the glycosyltransferase 1 family. Bacterial/plant glycogen synthase subfamily.

It carries out the reaction [(1-&gt;4)-alpha-D-glucosyl](n) + ADP-alpha-D-glucose = [(1-&gt;4)-alpha-D-glucosyl](n+1) + ADP + H(+). The protein operates within glycan biosynthesis; glycogen biosynthesis. In terms of biological role, synthesizes alpha-1,4-glucan chains using ADP-glucose. The polypeptide is Glycogen synthase 1 (Synechococcus sp. (strain JA-2-3B'a(2-13)) (Cyanobacteria bacterium Yellowstone B-Prime)).